The following is a 453-amino-acid chain: Aldehyde dehydrogenase, dimeric NADP-preferring (453 aa).

Ser-2 carries the post-translational modification N-acetylserine. Lys-178 carries the post-translational modification N6-acetyllysine. NAD(+) is bound at residue 188 to 193 (GSTAVG). An N6-acetyllysine modification is found at Lys-194. Residues Glu-210 and Cys-244 contribute to the active site.

This sequence belongs to the aldehyde dehydrogenase family. Homodimer.

Its subcellular location is the cytoplasm. It carries out the reaction an aldehyde + NAD(+) + H2O = a carboxylate + NADH + 2 H(+). It catalyses the reaction octanal + NAD(+) + H2O = octanoate + NADH + 2 H(+). Its function is as follows. ALDHs play a major role in the detoxification of alcohol-derived acetaldehyde. They are involved in the metabolism of corticosteroids, biogenic amines, neurotransmitters, and lipid peroxidation. Oxidizes medium and long chain aldehydes into non-toxic fatty acids. Preferentially oxidizes aromatic aldehyde substrates. Comprises about 50 percent of corneal epithelial soluble proteins. May play a role in preventing corneal damage caused by ultraviolet light. The protein is Aldehyde dehydrogenase, dimeric NADP-preferring (Aldh3a1) of Rattus norvegicus (Rat).